We begin with the raw amino-acid sequence, 230 residues long: UPF0173 metal-dependent hydrolase OEOE_1287 (230 aa).

It belongs to the UPF0173 family.

This Oenococcus oeni (strain ATCC BAA-331 / PSU-1) protein is UPF0173 metal-dependent hydrolase OEOE_1287.